The primary structure comprises 249 residues: Octanoyltransferase (249 aa).

The segment at 1–23 (MVNSPQNPRQDQRQDLDLTSFSA) is disordered. Positions 57–241 (GEAPELVWLL…AFEELFGPTR (185 aa)) constitute a BPL/LPL catalytic domain. Substrate is bound by residues 95-102 (RGGQLTYH), 170-172 (AIG), and 183-185 (GIA). Residue cysteine 201 is the Acyl-thioester intermediate of the active site.

The protein belongs to the LipB family.

It is found in the cytoplasm. The catalysed reaction is octanoyl-[ACP] + L-lysyl-[protein] = N(6)-octanoyl-L-lysyl-[protein] + holo-[ACP] + H(+). Its pathway is protein modification; protein lipoylation via endogenous pathway; protein N(6)-(lipoyl)lysine from octanoyl-[acyl-carrier-protein]: step 1/2. In terms of biological role, catalyzes the transfer of endogenously produced octanoic acid from octanoyl-acyl-carrier-protein onto the lipoyl domains of lipoate-dependent enzymes. Lipoyl-ACP can also act as a substrate although octanoyl-ACP is likely to be the physiological substrate. The chain is Octanoyltransferase from Bradyrhizobium diazoefficiens (strain JCM 10833 / BCRC 13528 / IAM 13628 / NBRC 14792 / USDA 110).